A 1205-amino-acid polypeptide reads, in one-letter code: Plasma membrane calcium-transporting ATPase 4 (1205 aa).

The Cytoplasmic portion of the chain corresponds to Met-1 to Ala-100. The chain crosses the membrane as a helical span at residues Leu-101–Phe-121. Residues Tyr-122–Thr-147 lie on the Extracellular side of the membrane. Residues Gly-148–Phe-168 traverse the membrane as a helical segment. At Asn-169–Leu-369 the chain is on the cytoplasmic side. Positions Asp-294 to Asp-318 are disordered. Residues Ser-329 and Ser-335 each carry the phosphoserine modification. The chain crosses the membrane as a helical span at residues Ile-370–Ile-390. Over Gln-391–Lys-409 the chain is Extracellular. The helical transmembrane segment at Phe-410–Val-430 threads the bilayer. Residues Thr-431–Phe-844 are Cytoplasmic-facing. Asp-466 serves as the catalytic 4-aspartylphosphate intermediate. Mg(2+) is bound by residues Asp-786 and Asp-790. Residues Leu-845–Ile-865 traverse the membrane as a helical segment. The Extracellular segment spans residues Thr-866–Lys-872. The chain crosses the membrane as a helical span at residues Ala-873 to Thr-893. Over Glu-894 to Lys-919 the chain is Cytoplasmic. Residues Asn-920–Leu-942 form a helical membrane-spanning segment. Topologically, residues Phe-943–Pro-956 are extracellular. Residues Pro-957–Ala-979 traverse the membrane as a helical segment. Topologically, residues Arg-980–Asn-995 are cytoplasmic. A helical transmembrane segment spans residues Ile-996–Gly-1016. Residues Gly-1017–Gln-1029 lie on the Extracellular side of the membrane. A helical membrane pass occupies residues Trp-1030–Ile-1050. At Pro-1051–Val-1205 the chain is on the cytoplasmic side. A phosphoserine mark is found at Ser-1065 and Ser-1071. Arg-1072 carries the post-translational modification Omega-N-methylarginine. A calmodulin-binding subdomain A region spans residues Leu-1087 to Gln-1104. Residue Thr-1103 is modified to Phosphothreonine; by PKC. The interval Ile-1105–Asn-1114 is calmodulin-binding subdomain B. The residue at position 1145 (Ser-1145) is a Phosphoserine.

The protein belongs to the cation transport ATPase (P-type) (TC 3.A.3) family. Type IIB subfamily. In terms of assembly, interacts with PDZD11. Interacts with SLC35G1 and STIM1. Interacts with calmodulin. In terms of tissue distribution, specifically expressed by sperm in testis (at protein level).

Its subcellular location is the membrane. It localises to the cell projection. The protein localises to the cilium. The protein resides in the flagellum membrane. It carries out the reaction Ca(2+)(in) + ATP + H2O = Ca(2+)(out) + ADP + phosphate + H(+). Activated by calcium/calmodulin. Functionally, calcium/calmodulin-regulated and magnesium-dependent enzyme that catalyzes the hydrolysis of ATP coupled with the transport of calcium out of the cell. By regulating sperm cell calcium homeostasis, may play a role in sperm motility. The polypeptide is Plasma membrane calcium-transporting ATPase 4 (Mus musculus (Mouse)).